The sequence spans 246 residues: E3 ubiquitin-protein ligase MARCHF2 (246 aa).

Residues 56–116 (DTPSDGPFCR…ELCHTEFAVE (61 aa)) form an RING-CH-type zinc finger. Residues 56 to 116 (DTPSDGPFCR…ELCHTEFAVE (61 aa)) form a required for inhibition of HIV-1 virus production and VSV G protein expression region. Cys64, Cys67, Cys80, Cys82, His90, Cys93, Cys106, and Cys109 together coordinate Zn(2+). The segment at 121–246 (PLTEWLKDPG…LKKVAEETPV (126 aa)) is required for interaction with IKBKG. 2 helical membrane passes run 138-158 (LCCDMVCFLFITPLAAISGWL) and 175-195 (AVGLIALTIALFTIYVLWTLV).

Interacts with STX6; the interaction promotes MARCHF2-mediated ubiquitination and degradation of CFTR. Interacts with MARCHF3. Interacts with GOPC/CAL; the interaction leads to CFTR ubiquitination and degradation. Interacts with CFTR; the interaction leads to CFTR ubiqtuitination and degradation. Interacts (via PDZ domain) with DLG1 (via PDZ domains); the interaction leads to DLG1 ubiqtuitination and degradation. Interacts with ERGIC3. Interacts with ADRB2. Interacts with IKBKG/NEMO; during the late stages of macrophage viral and bacterial infection; the interaction leads to ubiquitination and degradation of IKBKG/NEMO. Broadly expressed.

It is found in the endoplasmic reticulum membrane. Its subcellular location is the lysosome membrane. It localises to the endosome membrane. The protein localises to the golgi apparatus membrane. The protein resides in the cytoplasm. It is found in the cell membrane. The catalysed reaction is S-ubiquitinyl-[E2 ubiquitin-conjugating enzyme]-L-cysteine + [acceptor protein]-L-lysine = [E2 ubiquitin-conjugating enzyme]-L-cysteine + N(6)-ubiquitinyl-[acceptor protein]-L-lysine.. Its pathway is protein modification; protein ubiquitination. E3 ubiquitin-protein ligase that may mediate ubiquitination of TFRC and CD86, and promote their subsequent endocytosis and sorting to lysosomes via multivesicular bodies. E3 ubiquitin ligases accept ubiquitin from an E2 ubiquitin-conjugating enzyme in the form of a thioester and then directly transfer the ubiquitin to targeted substrates. Together with GOPC/CAL mediates the ubiquitination and lysosomal degradation of CFTR. Ubiquitinates and therefore mediates the degradation of DLG1. Regulates the intracellular trafficking and secretion of alpha1-antitrypsin/SERPINA1 and HP/haptoglobin via ubiquitination and degradation of the cargo receptor ERGIC3. Negatively regulates the antiviral and antibacterial immune response by repression of the NF-kB and type 1 IFN signaling pathways, via MARCHF2-mediated K48-linked polyubiquitination of IKBKG/NEMO, resulting in its proteasomal degradation. May be involved in endosomal trafficking through interaction with STX6. Its function is as follows. (Microbial infection) Positively regulates the degradation of Vesicular stomatitis virus (VSV) G protein via the lysosomal degradation pathway. Represses HIV-1 viral production and may inhibit the translocation of HIV-1 env to the cell surface, resulting in decreased viral cell-cell transmission. The chain is E3 ubiquitin-protein ligase MARCHF2 from Homo sapiens (Human).